A 228-amino-acid polypeptide reads, in one-letter code: Large ribosomal subunit protein uL3 (228 aa).

The tract at residues 135–159 is disordered; the sequence is MKSQRASHGNSRSHNVPGSIGMAQD. The span at 140 to 150 shows a compositional bias: polar residues; it reads ASHGNSRSHNV. An N5-methylglutamine modification is found at Gln158.

This sequence belongs to the universal ribosomal protein uL3 family. In terms of assembly, part of the 50S ribosomal subunit. Forms a cluster with proteins L14 and L19. Post-translationally, methylated by PrmB.

One of the primary rRNA binding proteins, it binds directly near the 3'-end of the 23S rRNA, where it nucleates assembly of the 50S subunit. In Albidiferax ferrireducens (strain ATCC BAA-621 / DSM 15236 / T118) (Rhodoferax ferrireducens), this protein is Large ribosomal subunit protein uL3.